The primary structure comprises 408 residues: Snake venom metalloproteinase BaP1 (408 aa).

A signal peptide spans 1–20; the sequence is MIEVLLVTICLAVFPYQGSS. Residues 21-191 constitute a propeptide that is removed on maturation; that stretch reads IILESGNVND…KASQSNLTPE (171 aa). The residue at position 192 (glutamine 192) is a Pyrrolidone carboxylic acid. The 197-residue stretch at 198–394 folds into the Peptidase M12B domain; sequence RYIELAVVAD…HNPQCILNKP (197 aa). 3 cysteine pairs are disulfide-bonded: cysteine 309–cysteine 389, cysteine 349–cysteine 373, and cysteine 351–cysteine 356. Histidine 334 lines the Zn(2+) pocket. Glutamate 335 is a catalytic residue. Zn(2+) contacts are provided by histidine 338 and histidine 344. The propeptide occupies 395–408; it reads LLTVSGNELLEAGE.

It belongs to the venom metalloproteinase (M12B) family. P-I subfamily. Monomer. It depends on Zn(2+) as a cofactor. As to expression, expressed by the venom gland.

The protein resides in the secreted. Inhibited by EDTA, partially inhibited by o-phenantropine, and not inhibited by PMSF, pepstatin A, and aprotinin. Its function is as follows. Zinc metalloprotease that exhibits a weak hemorrhagic activity (with a minimum hemorrhagic dose of 20 ug by intradermal and intramuscular injection into mice). The basal membrane components collagen (all chains of type IV) (COL4A4), laminin and nidogen are all degraded by this toxin. Rapidly degrades the Aalpha-chain (FGA) of fibrinogen, and later on, degrades the Bbeta-chain (FGB) of fibrinogen. Also activates the complement system, and induces rat neutrophil chemotaxis. Induces edema in mouse food pad and shows a mild myotoxicity. In Bothrops asper (Terciopelo), this protein is Snake venom metalloproteinase BaP1.